Reading from the N-terminus, the 1046-residue chain is UDP-N-acetylglucosamine--peptide N-acetylglucosaminyltransferase 110 kDa subunit (1046 aa).

Residue Ala2 is modified to N-acetylalanine. 2 positions are modified to phosphoserine; by GSK3-beta; alternate: Ser3 and Ser4. Residues Ser3 and Ser4 are each glycosylated (O-linked (GlcNAc) serine; alternate). Phosphoserine is present on Ser20. 12 TPR repeats span residues Phe21–Asn54, Ala89–Phe122, Ile123–Leu156, Tyr157–Phe190, Ala191–Phe224, Leu225–His258, Ala259–Phe292, Pro293–His326, Ala327–Phe360, Ala361–Phe394, Ala395–Phe428, and Ala429–Phe462. Residue Ser399 is glycosylated (O-linked (GlcNAc) serine; by autocatalysis). Position 454 is a phosphothreonine (Thr454). Residues Pro463–Leu473 form a TPR 13; truncated repeat. The DFP motif motif lies at Asp464–Tyr466. A Nuclear localization signal motif is present at residues Lys487–Pro503. The active-site Proton acceptor is His508. UDP-binding positions include Gln849, Lys852, Ala906 to Lys908, His911 to Arg914, His930 to Thr932, and Asp935. Position 989 is a phosphotyrosine (Tyr989). The segment at Lys991–Lys1010 is required for phosphatidylinositol 3,4,5-triphosphate binding.

Belongs to the glycosyltransferase 41 family. O-GlcNAc transferase subfamily. In terms of assembly, monomer; may exist in different oligomerization states in cells. Homotrimer, oligomerizes via TPR repeats 6 and 7. Trimerization is not necessary for activity in vitro, however it increases affinity for UDP-GlcNAc. Component of a THAP1/THAP3-HCFC1-OGT complex. Component of the NSL complex at least composed of MOF/KAT8, KANSL1, KANSL2, KANSL3, MCRS1, PHF20, OGT1/OGT, WDR5 and HCFC1. Found in a complex with KIF5B, RHOT1, RHOT2 and TRAK1. Found in a complex composed of at least SINHCAF, SIN3A, HDAC1, SAP30, RBBP4, OGT and TET1. Component of a complex composed of KMT2E/MLL5, OGT and USP7; the complex stabilizes KMT2E/MLL5, preventing KMT2E/MLL5 ubiquitination and proteasomal-mediated degradation. Interacts (via TPRs 1-6) with SIN3A; the interaction mediates transcriptional repression in parallel with histone deacetylase. Interacts (via TPR 5-6) with TET1, TET2 and TET3. Interacts (via TPR repeats 6 and 7) with ATXN10. Interacts with NSD2. Interacts with PROSER1; this interaction mediates TET2 O-GlcNAcylation and stability by promoting the interaction between OGT and TET2. In terms of processing, ubiquitinated by the SCF(FBXO31) complex, leading to its proteasomal degradation. Phosphorylation on Ser-3 or Ser-4 by GSK3-beta positively regulates its activity. Phosphorylation at Thr-454 by AMPK promotes nuclear localization. Post-translationally, glycosylated via autocatalysis; O-GlcNAcylation at Ser-399 promotes nuclear localization.

It is found in the nucleus. It localises to the cytoplasm. The catalysed reaction is L-seryl-[protein] + UDP-N-acetyl-alpha-D-glucosamine = 3-O-(N-acetyl-beta-D-glucosaminyl)-L-seryl-[protein] + UDP + H(+). It catalyses the reaction L-threonyl-[protein] + UDP-N-acetyl-alpha-D-glucosamine = 3-O-(N-acetyl-beta-D-glucosaminyl)-L-threonyl-[protein] + UDP + H(+). Its pathway is protein modification; protein glycosylation. Subject to product inhibition by UDP. Functionally, catalyzes the transfer of a single N-acetylglucosamine from UDP-GlcNAc to a serine or threonine residue in cytoplasmic and nuclear proteins resulting in their modification with a beta-linked N-acetylglucosamine (O-GlcNAc). Glycosylates a large and diverse number of proteins including histone H2B, AKT1, AMPK, ATG4B, CAPRIN1, EZH2, FNIP1, GSDMD, KRT7, LMNA, LMNB1, LMNB2, RPTOR, HOXA1, PFKL, KMT2E/MLL5, MAPT/TAU, TET2, RBL2, RET, NOD2 and HCFC1. Can regulate their cellular processes via cross-talk between glycosylation and phosphorylation or by affecting proteolytic processing. Involved in insulin resistance in muscle and adipocyte cells via glycosylating insulin signaling components and inhibiting the 'Thr-308' phosphorylation of AKT1, enhancing IRS1 phosphorylation and attenuating insulin signaling. Involved in glycolysis regulation by mediating glycosylation of 6-phosphofructokinase PFKL, inhibiting its activity. Plays a key role in chromatin structure by mediating O-GlcNAcylation of 'Ser-112' of histone H2B: recruited to CpG-rich transcription start sites of active genes via its interaction with TET proteins (TET1, TET2 or TET3). As part of the NSL complex indirectly involved in acetylation of nucleosomal histone H4 on several lysine residues. O-GlcNAcylation of 'Ser-75' of EZH2 increases its stability, and facilitating the formation of H3K27me3 by the PRC2/EED-EZH2 complex. Stabilizes KMT2E/MLL5 by mediating its glycosylation, thereby preventing KMT2E/MLL5 ubiquitination. Regulates circadian oscillation of the clock genes and glucose homeostasis in the liver. Stabilizes clock proteins BMAL1 and CLOCK through O-glycosylation, which prevents their ubiquitination and subsequent degradation. Promotes the CLOCK-BMAL1-mediated transcription of genes in the negative loop of the circadian clock such as PER1/2 and CRY1/2. O-glycosylates HCFC1 and regulates its proteolytic processing and transcriptional activity. Component of a THAP1/THAP3-HCFC1-OGT complex that is required for the regulation of the transcriptional activity of RRM1. Regulates mitochondrial motility in neurons by mediating glycosylation of TRAK1. Promotes autophagy by mediating O-glycosylation of ATG4B. Acts as a regulator of mTORC1 signaling by mediating O-glycosylation of RPTOR and FNIP1: O-GlcNAcylation of RPTOR in response to glucose sufficiency promotes activation of the mTORC1 complex. The protein is UDP-N-acetylglucosamine--peptide N-acetylglucosaminyltransferase 110 kDa subunit (OGT) of Sus scrofa (Pig).